Reading from the N-terminus, the 808-residue chain is Phospholipase D alpha 1 (808 aa).

Residues 1-125 form the C2 domain; the sequence is MSKVLLHGTL…LDGDEVDKWI (125 aa). Ca(2+) is bound at residue Asp186. The PLD phosphodiesterase 1 domain occupies 326-364; that stretch reads TMFTHHQKIVVVDHELPRGGSQKRRVMSFVGGIDLCDGR. Residues His331, Lys333, and Asp338 contribute to the active site. His331 contacts a 1,2-diacyl-sn-glycero-3-phosphate. 2 residues coordinate Ca(2+): His370 and His404. Residues Gln520 and His659 each coordinate a 1,2-diacyl-sn-glycero-3-phosphate. The PLD phosphodiesterase 2 domain occupies 654-681; that stretch reads FMIYVHSKMMIVDDEYIIVGSANINQRS. Active-site residues include His659, Lys661, and Asp666. Glu720 contributes to the Ca(2+) binding site.

This sequence belongs to the phospholipase D family. C2-PLD subfamily. Interacts (via C2 domain) with CARDA (via RGD or KGE motifs). Ca(2+) is required as a cofactor.

The catalysed reaction is a 1,2-diacyl-sn-glycero-3-phosphocholine + H2O = a 1,2-diacyl-sn-glycero-3-phosphate + choline + H(+). Hydrolyzes glycerol-phospholipids at the terminal phosphodiesteric bond. Plays an important role in various cellular processes. This chain is Phospholipase D alpha 1, found in Cynara cardunculus (Cardoon).